Consider the following 82-residue polypeptide: Large ribosomal subunit protein bL27 (82 aa).

Residues 1–54 are disordered; sequence MAHKKGQGASRNGRDSESKRLGMKVGAGQRVSTGSILVRQRGTKWHPSQNVGRG.

Belongs to the bacterial ribosomal protein bL27 family.

In Chlamydia caviae (strain ATCC VR-813 / DSM 19441 / 03DC25 / GPIC) (Chlamydophila caviae), this protein is Large ribosomal subunit protein bL27.